Reading from the N-terminus, the 578-residue chain is E3 ubiquitin protein ligase RIN2 (578 aa).

6 helical membrane-spanning segments follow: residues 6–26, 58–78, 111–131, 161–181, 186–206, and 272–292; these read LPVS…WTEL, FTIA…VLSL, LVIP…TVLC, VYSV…LSLM, IGSA…FETL, and YLHI…VLFL. Residues 337 to 379 form an RING-type; atypical zinc finger; sequence CAICREPMAKAKRLHCNHLFHLGCLRSWLDQGLNEVYSCPTCR. Positions 504–513 are enriched in polar residues; the sequence is QASTSSTTVP. Positions 504–524 are disordered; sequence QASTSSTTVPPGNGGRTGGLH. The CUE domain maps to 538–578; sequence NILAMAETVREVMPHVPDEIIFQDLQRTNSVAVTVNNLLQM.

As to quaternary structure, interacts (via C-terminus) with RPM1 (via N-terminus).

The protein localises to the membrane. It catalyses the reaction S-ubiquitinyl-[E2 ubiquitin-conjugating enzyme]-L-cysteine + [acceptor protein]-L-lysine = [E2 ubiquitin-conjugating enzyme]-L-cysteine + N(6)-ubiquitinyl-[acceptor protein]-L-lysine.. It participates in protein modification; protein ubiquitination. E3 ubiquitin protein ligase that acts as a positive regulator of RPM1- and RPS2-dependent hypersensitive response (HR), in association with RIN3. Probably not required for RPM1 degradation during HR. This Arabidopsis thaliana (Mouse-ear cress) protein is E3 ubiquitin protein ligase RIN2 (RIN2).